Consider the following 433-residue polypeptide: Tol-Pal system protein TolB (433 aa).

Positions 1 to 26 are cleaved as a signal peptide; the sequence is MSLMTKLGFRALVASCLIAAGGAAHA.

This sequence belongs to the TolB family. In terms of assembly, the Tol-Pal system is composed of five core proteins: the inner membrane proteins TolA, TolQ and TolR, the periplasmic protein TolB and the outer membrane protein Pal. They form a network linking the inner and outer membranes and the peptidoglycan layer.

The protein localises to the periplasm. Its function is as follows. Part of the Tol-Pal system, which plays a role in outer membrane invagination during cell division and is important for maintaining outer membrane integrity. This chain is Tol-Pal system protein TolB, found in Burkholderia thailandensis (strain ATCC 700388 / DSM 13276 / CCUG 48851 / CIP 106301 / E264).